The primary structure comprises 314 residues: Ribosomal RNA small subunit methyltransferase H (314 aa).

S-adenosyl-L-methionine is bound by residues 40–42 (GGH), aspartate 60, phenylalanine 85, aspartate 107, and glutamine 114.

Belongs to the methyltransferase superfamily. RsmH family.

It is found in the cytoplasm. It catalyses the reaction cytidine(1402) in 16S rRNA + S-adenosyl-L-methionine = N(4)-methylcytidine(1402) in 16S rRNA + S-adenosyl-L-homocysteine + H(+). Its function is as follows. Specifically methylates the N4 position of cytidine in position 1402 (C1402) of 16S rRNA. The polypeptide is Ribosomal RNA small subunit methyltransferase H (Hydrogenovibrio crunogenus (strain DSM 25203 / XCL-2) (Thiomicrospira crunogena)).